The chain runs to 183 residues: NRR repressor homolog 1 (183 aa).

2 disordered regions span residues methionine 1–glycine 40 and asparagine 66–glutamine 183. The segment covering glutamate 31–glycine 40 has biased composition (acidic residues). Positions glycine 70–alanine 79 are enriched in gly residues. Positions phenylalanine 101 to alanine 115 are enriched in acidic residues. The segment covering alanine 135–alanine 145 has biased composition (basic and acidic residues). Acidic residues predominate over residues alanine 150–glutamate 161. The span at valine 163–glutamine 183 shows a compositional bias: basic and acidic residues.

This sequence belongs to the NPR1-interactor family. Interacts with NPR1/NH1. Interacts with NPR3/NH3.

The protein resides in the nucleus. Binds to and represses NPR1/NH1-mediated transcriptional activation of LG2 in vitro. The sequence is that of NRR repressor homolog 1 from Oryza sativa subsp. japonica (Rice).